Here is a 434-residue protein sequence, read N- to C-terminus: Ribulose bisphosphate carboxylase-like protein (434 aa).

Positions 198, 200, and 201 each coordinate Mg(2+). N6-carboxylysine is present on Lys-198.

This sequence belongs to the RuBisCO large chain family. Type IV subfamily. Homodimer. Mg(2+) is required as a cofactor.

May be involved in sulfur metabolism and oxidative stress response. Does not show RuBisCO activity. The sequence is that of Ribulose bisphosphate carboxylase-like protein from Chlorobaculum thiosulfatiphilum (Chlorobium limicola f.sp. thiosulfatophilum).